The primary structure comprises 330 residues: Glycerol-3-phosphate dehydrogenase [NAD(P)+] (330 aa).

NADPH-binding residues include Ser10, Trp11, Arg31, and Lys105. Lys105, Gly135, and Ser137 together coordinate sn-glycerol 3-phosphate. Ala139 lines the NADPH pocket. Residues Lys190, Asp243, Ser253, Arg254, and Asn255 each contribute to the sn-glycerol 3-phosphate site. The Proton acceptor role is filled by Lys190. Residue Arg254 coordinates NADPH. Residues Val278 and Glu280 each contribute to the NADPH site.

Belongs to the NAD-dependent glycerol-3-phosphate dehydrogenase family.

The protein localises to the cytoplasm. The enzyme catalyses sn-glycerol 3-phosphate + NAD(+) = dihydroxyacetone phosphate + NADH + H(+). The catalysed reaction is sn-glycerol 3-phosphate + NADP(+) = dihydroxyacetone phosphate + NADPH + H(+). It participates in membrane lipid metabolism; glycerophospholipid metabolism. In terms of biological role, catalyzes the reduction of the glycolytic intermediate dihydroxyacetone phosphate (DHAP) to sn-glycerol 3-phosphate (G3P), the key precursor for phospholipid synthesis. This chain is Glycerol-3-phosphate dehydrogenase [NAD(P)+], found in Solidesulfovibrio magneticus (strain ATCC 700980 / DSM 13731 / RS-1) (Desulfovibrio magneticus).